The following is a 570-amino-acid chain: Arginine--tRNA ligase (570 aa).

A 'HIGH' region motif is present at residues 127 to 137 (ANPTGPLHLGH).

The protein belongs to the class-I aminoacyl-tRNA synthetase family. As to quaternary structure, monomer.

It is found in the cytoplasm. The enzyme catalyses tRNA(Arg) + L-arginine + ATP = L-arginyl-tRNA(Arg) + AMP + diphosphate. This is Arginine--tRNA ligase from Neorickettsia sennetsu (strain ATCC VR-367 / Miyayama) (Ehrlichia sennetsu).